A 364-amino-acid polypeptide reads, in one-letter code: MKRYLVLEDGTIYPGTGFGATTATVGELVFNTGMSGYQESITDQSYNGEILMFTYPLIGNYGINRDDHESIKPTCKGVVVHEVARRASNWRNAQSLDDYLKQNAIPGIMDIDTRAVTKHIRTKGAMKATIVDNVLPDTVDRLKVTELNRAVVAQSSTNNAYPNPATGPNVVVVDFGLKHSILRELAKRQCNLTVLPYNTTASEIMALNPDGVMLTNGPGDPKDVPGALEMIREVEKHVPLFGICLGHQLFALANGADTFKMKFGHRGFNHPVREIATGRIDFTSQNHGYAVDRDSLAQTDLLITHEEINDGTVEGLRHRDYAAFSVQYHPDAAPGPHDADHIFDEFIDLMAANQATQKGSQFNA.

Positions 1 to 169 (MKRYLVLEDG…AYPNPATGPN (169 aa)) are CPSase. L-glutamine-binding residues include Ser-45, Gly-217, and Gly-219. Positions 169-356 (NVVVVDFGLK…IDLMAANQAT (188 aa)) constitute a Glutamine amidotransferase type-1 domain. Cys-244 acts as the Nucleophile in catalysis. The L-glutamine site is built by Leu-245, Gln-248, Asn-286, Gly-288, and Tyr-289. Catalysis depends on residues His-329 and Asp-331.

It belongs to the CarA family. Composed of two chains; the small (or glutamine) chain promotes the hydrolysis of glutamine to ammonia, which is used by the large (or ammonia) chain to synthesize carbamoyl phosphate. Tetramer of heterodimers (alpha,beta)4.

The enzyme catalyses hydrogencarbonate + L-glutamine + 2 ATP + H2O = carbamoyl phosphate + L-glutamate + 2 ADP + phosphate + 2 H(+). The catalysed reaction is L-glutamine + H2O = L-glutamate + NH4(+). It functions in the pathway pyrimidine metabolism; UMP biosynthesis via de novo pathway; (S)-dihydroorotate from bicarbonate: step 1/3. Inhibited by pyrimidine. Small subunit of the glutamine-dependent carbamoyl phosphate synthetase (CPSase). CPSase catalyzes the formation of carbamoyl phosphate from the ammonia moiety of glutamine, carbonate, and phosphate donated by ATP, constituting the first step of the biosynthetic pathway leading to pyrimidine nucleotides. The small subunit (glutamine amidotransferase) binds and cleaves glutamine to supply the large subunit with the substrate ammonia. In Lactiplantibacillus plantarum (strain ATCC BAA-793 / NCIMB 8826 / WCFS1) (Lactobacillus plantarum), this protein is Carbamoyl phosphate synthase pyrimidine-specific small chain.